Here is a 215-residue protein sequence, read N- to C-terminus: Adenylate kinase (215 aa).

10 to 15 (GAGKGT) is a binding site for ATP. An NMP region spans residues 30–59 (STGDMLRSAIKSGSELGKKAKQVMDAGQLV). Residues threonine 31, arginine 36, 57–59 (QLV), 85–88 (GFPR), and glutamine 92 contribute to the AMP site. The interval 122 to 159 (GRRVHPGSGRVYHVEHNPPKVEGKDDETGEDLVVRPDD) is LID. ATP-binding positions include arginine 123 and 132 to 133 (VY). Residues 128-151 (GSGRVYHVEHNPPKVEGKDDETGE) form a disordered region. Positions 133-144 (YHVEHNPPKVEG) are enriched in basic and acidic residues. AMP contacts are provided by arginine 156 and arginine 167. The interval 195–215 (KIDGTQPVERVSEQLGDLLRK) is disordered. ATP is bound at residue glutamine 200.

Belongs to the adenylate kinase family. In terms of assembly, monomer.

The protein resides in the cytoplasm. The catalysed reaction is AMP + ATP = 2 ADP. It participates in purine metabolism; AMP biosynthesis via salvage pathway; AMP from ADP: step 1/1. Functionally, catalyzes the reversible transfer of the terminal phosphate group between ATP and AMP. Plays an important role in cellular energy homeostasis and in adenine nucleotide metabolism. This is Adenylate kinase from Idiomarina loihiensis (strain ATCC BAA-735 / DSM 15497 / L2-TR).